The following is a 1059-amino-acid chain: Ceruloplasmin (1059 aa).

An N-terminal signal peptide occupies residues 1 to 19; that stretch reads MKFLLLSALLFLHSSLAWT. Plastocyanin-like domains follow at residues 20–199, 208–356, 369–554, 564–712, 724–894, and 902–1055; these read REKH…LILC, KEEN…VRDC, HVRH…MKIC, RQKD…VNQC, GERT…LIVC, and FNPK…PNQE. Na(+) is bound by residues Tyr-55, Gly-64, and Tyr-67. Cu(2+)-binding residues include His-120 and His-122. Residue His-120 coordinates O2. A Ca(2+)-binding site is contributed by Lys-128. N-linked (GlcNAc...) asparagine glycosylation is present at Asn-138. 3 residues coordinate Ca(2+): Gln-143, Asp-146, and Asp-147. Cys-173 and Cys-199 are disulfide-bonded. Cu(2+) contacts are provided by His-179 and His-181. Residue His-179 participates in O2 binding. A glycan (N-linked (GlcNAc...) asparagine) is linked at Asn-226. Ser-255 contacts Na(+). A disulfide bond links Cys-275 and Cys-356. Residues His-294, Cys-337, and His-342 each coordinate Cu(2+). The N-linked (GlcNAc...) asparagine glycan is linked to Asn-396. 3 residues coordinate Na(+): Phe-407, Gly-416, and Tyr-419. Cys-528 and Cys-554 form a disulfide bridge. N-linked (GlcNAc...) asparagine glycosylation occurs at Asn-582. Residue Ser-611 coordinates Na(+). Cys-631 and Cys-712 are joined by a disulfide. Residues His-650, Cys-693, His-698, and Met-703 each contribute to the Cu(2+) site. The active-site Nucleophile; for glutathione peroxidase activity is Cys-693. Asn-756 carries an N-linked (GlcNAc...) asparagine glycan. Na(+) is bound by residues Phe-761, Gly-770, and Tyr-773. Cys-868 and Cys-894 are oxidised to a cystine. N-linked (GlcNAc...) asparagine glycosylation is present at Asn-920. A Na(+)-binding site is contributed by Ser-949. Cu(2+) contacts are provided by His-988, His-991, His-993, His-1033, Cys-1034, His-1035, His-1039, and Met-1044. Positions 991 and 993 each coordinate O2. His-1035 is a binding site for O2.

It belongs to the multicopper oxidase family. As to quaternary structure, found in a complex with MPO and LTF; interacts directly with MPO and LTF, which allows Fe(3+) incorporation into LTF, activation of CP ferroxidase activity and protection of CP antioxidant properties by MPO. Requires Cu(2+) as cofactor. As to expression, synthesized in liver and secreted into the plasma. Also choroid plexus, yolk sac, placenta, and testis; not in stomach and small intestine. Fetal lung and liver.

Its subcellular location is the secreted. The catalysed reaction is 4 Fe(2+) + O2 + 4 H(+) = 4 Fe(3+) + 2 H2O. The enzyme catalyses 4 Cu(+) + O2 + 4 H(+) = 4 Cu(2+) + 2 H2O. It catalyses the reaction a hydroperoxide + 2 glutathione = an alcohol + glutathione disulfide + H2O. It carries out the reaction 4 nitric oxide + O2 + 2 H2O = 4 nitrite + 4 H(+). The catalysed reaction is 2 glutathione + H2O2 = glutathione disulfide + 2 H2O. Multifunctional blue, copper-binding (6-7 atoms per molecule) glycoprotein. It has ferroxidase activity oxidizing Fe(2+) to Fe(3+) without releasing radical oxygen species. It is involved in iron transport across the cell membrane. Copper ions provide a large number of enzymatic activites. Oxidizes highly toxic ferrous ions to the ferric state for further incorporation onto apo-transferrins, catalyzes Cu(+) oxidation and promotes the oxidation of biogenic amines such as norepinephrin and serotonin. Provides Cu(2+) ions for the ascorbate-mediated deaminase degradation of the heparan sulfate chains of GPC1. Has glutathione peroxidase-like activity, can remove both hydrogen peroxide and lipid hydroperoxide in the presence of thiols. Also shows NO-oxidase and NO2 synthase activities that determine endocrine NO homeostasis. The sequence is that of Ceruloplasmin (Cp) from Rattus norvegicus (Rat).